Here is a 249-residue protein sequence, read N- to C-terminus: Triosephosphate isomerase (249 aa).

9–11 (NWK) provides a ligand contact to substrate. Catalysis depends on histidine 91, which acts as the Electrophile. Glutamate 163 serves as the catalytic Proton acceptor. Residues glycine 169, serine 209, and 230–231 (GG) each bind substrate.

The protein belongs to the triosephosphate isomerase family. Homodimer.

The protein localises to the cytoplasm. It carries out the reaction D-glyceraldehyde 3-phosphate = dihydroxyacetone phosphate. Its pathway is carbohydrate biosynthesis; gluconeogenesis. The protein operates within carbohydrate degradation; glycolysis; D-glyceraldehyde 3-phosphate from glycerone phosphate: step 1/1. In terms of biological role, involved in the gluconeogenesis. Catalyzes stereospecifically the conversion of dihydroxyacetone phosphate (DHAP) to D-glyceraldehyde-3-phosphate (G3P). The chain is Triosephosphate isomerase from Halorhodospira halophila (strain DSM 244 / SL1) (Ectothiorhodospira halophila (strain DSM 244 / SL1)).